We begin with the raw amino-acid sequence, 389 residues long: Rhizopuspepsin-1 (389 aa).

The N-terminal stretch at 1–21 (MKFTLISSCVALAAMTLAVEA) is a signal peptide. Positions 22-66 (APNGKKINIPLAKNNSYKPSAKNALNKALAKYNRRKVGSGGITTE) are cleaved as a propeptide — activation peptide. A Peptidase A1 domain is found at 82-385 (YYGEVTVGTP…NQEVPEVQIA (304 aa)). Asp-100 is a catalytic residue. Cysteines 113 and 116 form a disulfide. Residue Asp-283 is part of the active site. A disulfide bridge links Cys-317 with Cys-350.

Belongs to the peptidase A1 family.

The catalysed reaction is Hydrolysis of proteins with broad specificity similar to that of pepsin A, preferring hydrophobic residues at P1 and P1'. Clots milk and activates trypsinogen. Does not cleave 4-Gln-|-His-5, but does cleave 10-His-|-Leu-11 and 12-Val-|-Glu-13 in B chain of insulin.. In Rhizopus niveus, this protein is Rhizopuspepsin-1 (RNAP).